The sequence spans 113 residues: Small ribosomal subunit protein bS6 (113 aa).

The protein belongs to the bacterial ribosomal protein bS6 family.

Its function is as follows. Binds together with bS18 to 16S ribosomal RNA. The polypeptide is Small ribosomal subunit protein bS6 (Pseudoalteromonas translucida (strain TAC 125)).